We begin with the raw amino-acid sequence, 207 residues long: Guanylate kinase (207 aa).

Positions 17 to 197 constitute a Guanylate kinase-like domain; the sequence is GRLVVLAGPS…SCDELVSLLV (181 aa). 24–31 contacts ATP; the sequence is GPSAVGKS.

The protein belongs to the guanylate kinase family.

The protein localises to the cytoplasm. The enzyme catalyses GMP + ATP = GDP + ADP. Functionally, essential for recycling GMP and indirectly, cGMP. The polypeptide is Guanylate kinase (Rhodococcus jostii (strain RHA1)).